The following is a 1203-amino-acid chain: Cation-transporting ATPase catp-5 (1203 aa).

The Cytoplasmic segment spans residues 1-68; that stretch reads MNTSEREPLL…YAYKETIGRQ (68 aa). A disordered region spans residues 21–42; it reads TTDNPSTKIMKREKDNPKAKTT. The chain crosses the membrane as a helical span at residues 69 to 89; it reads ILFWLLTIVTLGFYQLLAYWV. The Extracellular segment spans residues 90 to 209; it reads KSLFVKVRFQ…RKIYNMNALA (120 aa). Residues 210–230 traverse the membrane as a helical segment; it reads LALTPILVILFKEVLGPFYLF. At 231 to 242 the chain is on the cytoplasmic side; sequence QCFSVALWYSDN. Residues 243–263 traverse the membrane as a helical segment; sequence YAYYASVIVIITVGSAAVAVY. Topologically, residues 264 to 297 are extracellular; that stretch reads QMRAQEKRIRNMVGDTISVIVRRDGHDITIDASE. Residues 298-318 form a helical membrane-spanning segment; sequence IVPMDILILPSNTFILPCDCL. Residues 319–414 lie on the Cytoplasmic side of the membrane; that stretch reads LMNGTVIVNE…KPQEKEALKD (96 aa). Residues 415 to 435 form a helical membrane-spanning segment; the sequence is VMVFILVLGFIALIGFIYTVI. Over 436–451 the chain is Extracellular; it reads EMVSRGESLKHIIIRS. The helical transmembrane segment at 452 to 472 threads the bilayer; it reads LDIITIVVPPALPAAMSVGII. Over 473–935 the chain is Cytoplasmic; the sequence is NANSRLKKKK…KEGRCALVTS (463 aa). Residue Asp503 is the 4-aspartylphosphate intermediate of the active site. Residues 595–617 are disordered; the sequence is ETQDFDTVQPTVLRPPPEQATYH. 2 residues coordinate Mg(2+): Asp883 and Asp887. A helical transmembrane segment spans residues 936-956; it reads YAVSKYMAAYSLNEFLSVMLL. The Extracellular segment spans residues 957 to 962; that stretch reads YNDGTN. A helical membrane pass occupies residues 963-983; it reads ISDGQFLYIDLVLITLVALFL. Over 984-1007 the chain is Cytoplasmic; sequence GNTEASRKLSGIPPPRRLATSAFY. The chain crosses the membrane as a helical span at residues 1008-1028; that stretch reads FSVFGQMFFNIITQTTGYLLV. At 1029–1046 the chain is on the extracellular side; that stretch reads RGQSWYVPNPEELDNTTT. Residues 1047 to 1067 form a helical membrane-spanning segment; that stretch reads MIGTTVFFTSCCMYLGYAFVY. Residues 1068–1085 lie on the Cytoplasmic side of the membrane; the sequence is SKGHPYRRSVFTNWLLCG. The helical transmembrane segment at 1086–1106 threads the bilayer; sequence IIFVIGAINMVMIFTNMGFLM. Topologically, residues 1107–1120 are extracellular; sequence NLMGFVYVPSTSMR. Residues 1121–1141 traverse the membrane as a helical segment; it reads FILLAISLAGVFLSLLYEHFF. The Cytoplasmic segment spans residues 1142 to 1203; it reads VEKVVAIHFE…DRKETIESKC (62 aa).

This sequence belongs to the cation transport ATPase (P-type) (TC 3.A.3) family. Type V subfamily. As to expression, expressed in the 20 intestinal cells and in the excretory cell.

It is found in the apical cell membrane. The catalysed reaction is ATP + H2O = ADP + phosphate + H(+). Functionally, involved in the uptake and/or transport of polyamines, probably through ATP hydrolysis. This contributes to the maintenance of intracellular polyamine levels. Polyamines are essential for cell proliferation and are implicated in cellular processes, ranging from DNA replication to apoptosis. The chain is Cation-transporting ATPase catp-5 from Caenorhabditis elegans.